Here is a 313-residue protein sequence, read N- to C-terminus: MSTREIRIATRKSALALWQAEYVKARLEQAHTGLQVTLVPMVSRGDKLLDAPLAKIGGKGLFVKELETALLDNEADIAVHSMKDVPMDFPEGLGLYCICEREDPRDAFVSNTFDSLETLPAGSIVGTSSLRRQAQLLARRPDLQIRFLRGNVNTRLAKLDAGEYDAIILAAAGLIRLGFEDRITSTISVDDSLPAGGQGAVGIECRSADVEIHALLAPLHHVDTADRVIAERALNKRLNGGCQVPIACYAVLEGDQLWLRGLVGQPSGGTLLVADARAPRAAAEALGVQVAEDLLGQGAEAILKEVYGEAGHP.

Cys-242 carries the S-(dipyrrolylmethanemethyl)cysteine modification.

The protein belongs to the HMBS family. In terms of assembly, monomer. Dipyrromethane serves as cofactor.

It carries out the reaction 4 porphobilinogen + H2O = hydroxymethylbilane + 4 NH4(+). The protein operates within porphyrin-containing compound metabolism; protoporphyrin-IX biosynthesis; coproporphyrinogen-III from 5-aminolevulinate: step 2/4. Tetrapolymerization of the monopyrrole PBG into the hydroxymethylbilane pre-uroporphyrinogen in several discrete steps. The protein is Porphobilinogen deaminase of Pseudomonas putida (strain ATCC 700007 / DSM 6899 / JCM 31910 / BCRC 17059 / LMG 24140 / F1).